The sequence spans 131 residues: Cuticle protein 79, isoform B (131 aa).

Repeat copies occupy residues Ala37–Ala40, Ala45–Ala48, and Ala53–Ala56.

Component of the cuticle of migratory locust which contains more than 100 different structural proteins. The chain is Cuticle protein 79, isoform B from Locusta migratoria (Migratory locust).